We begin with the raw amino-acid sequence, 435 residues long: Glutamate-1-semialdehyde 2,1-aminomutase (435 aa).

Position 269 is an N6-(pyridoxal phosphate)lysine (Lys269).

It belongs to the class-III pyridoxal-phosphate-dependent aminotransferase family. HemL subfamily. Homodimer. Pyridoxal 5'-phosphate serves as cofactor.

It is found in the cytoplasm. The enzyme catalyses (S)-4-amino-5-oxopentanoate = 5-aminolevulinate. It participates in porphyrin-containing compound metabolism; protoporphyrin-IX biosynthesis; 5-aminolevulinate from L-glutamyl-tRNA(Glu): step 2/2. In Gemmatimonas aurantiaca (strain DSM 14586 / JCM 11422 / NBRC 100505 / T-27), this protein is Glutamate-1-semialdehyde 2,1-aminomutase.